Reading from the N-terminus, the 213-residue chain is Chromosome segregation in meiosis protein 2 (213 aa).

The protein belongs to the CSM2 family. In terms of assembly, component of the SHU complex composed of at least CSM2, PSY3, SHU1 and SHU2.

It localises to the cytoplasm. Its subcellular location is the nucleus. Its function is as follows. Involved in chromosome segregation during meiosis. Promotes efficient recombinational repair and functions in the protection of the genome from spontaneous and induced DNA damage like mutations and gross chromosomal rearrangements (GCRs). This is Chromosome segregation in meiosis protein 2 (CSM2) from Saccharomyces cerevisiae (strain ATCC 204508 / S288c) (Baker's yeast).